The sequence spans 389 residues: Alkanesulfonate monooxygenase (389 aa).

Belongs to the SsuD family.

The catalysed reaction is an alkanesulfonate + FMNH2 + O2 = an aldehyde + FMN + sulfite + H2O + 2 H(+). In terms of biological role, catalyzes the desulfonation of aliphatic sulfonates. The polypeptide is Alkanesulfonate monooxygenase (Rhizobium etli (strain CIAT 652)).